Here is a 606-residue protein sequence, read N- to C-terminus: DNA mismatch repair protein MutL (606 aa).

Residues 377 to 401 form a disordered region; sequence HRPLFAPQPAPQPDREPPLPDSGSR.

It belongs to the DNA mismatch repair MutL/HexB family.

This protein is involved in the repair of mismatches in DNA. It is required for dam-dependent methyl-directed DNA mismatch repair. May act as a 'molecular matchmaker', a protein that promotes the formation of a stable complex between two or more DNA-binding proteins in an ATP-dependent manner without itself being part of a final effector complex. The chain is DNA mismatch repair protein MutL from Geobacter sulfurreducens (strain ATCC 51573 / DSM 12127 / PCA).